Reading from the N-terminus, the 225-residue chain is Membrane protein (225 aa).

Residues 1–20 (MPNETNCTLDFEQSVQLFKE) lie on the Virion surface side of the membrane. Residues 21–41 (YNLFITAFLLFLTIILQYGYA) traverse the membrane as a helical segment. At 42-51 (TRSKVIYTLK) the chain is on the intravirion side. A helical membrane pass occupies residues 52–72 (MIVLWCFWPLNIAVGVISCTY). Residues 73–77 (PPNTG) are Virion surface-facing. A helical transmembrane segment spans residues 78 to 98 (GLVAAIILTVFACLSFVGYWI). Residues 99–225 (QSIRLFKRCR…VATGGSSLYT (127 aa)) are Intravirion-facing.

This sequence belongs to the gammacoronaviruses M protein family. Homomultimer. Interacts with envelope E protein in the budding compartment of the host cell, which is located between endoplasmic reticulum and the Golgi complex. Forms a complex with HE and S proteins. Interacts with nucleocapsid N protein. This interaction probably participates in RNA packaging into the virus.

It is found in the virion membrane. The protein localises to the host Golgi apparatus membrane. Component of the viral envelope that plays a central role in virus morphogenesis and assembly via its interactions with other viral proteins. This is Membrane protein from Avian infectious bronchitis virus (strain Beaudette) (IBV).